Consider the following 114-residue polypeptide: Histone H2A.Z-specific chaperone chz-1 (114 aa).

The segment covering 1-22 (MSTENGTTDTTLAGTAEANTPF) has biased composition (polar residues). The tract at residues 1–114 (MSTENGTTDT…FVPEDEEMEE (114 aa)) is disordered. The span at 24-40 (SKGKGKAAAESEDHPMG) shows a compositional bias: basic and acidic residues. Composition is skewed to acidic residues over residues 41–68 (EAEDDEDDEDEDETEEPEAEEDNLEEID) and 93–114 (PAEEDDEEDDEEFVPEDEEMEE).

The protein belongs to the CHZ1 family. As to quaternary structure, forms a heterotrimer with H2A.Z-H2B, stabilizing the association of the histone dimer. Also, with a lower affinity, forms a heterotrimer with H2A-H2B.

The protein localises to the nucleus. Forms a chaperone-bound H2A.Z-H2B complex that acts as a source for SWR1 complex-dependent H2A to H2A.Z histone replacement in chromatin. This Neurospora crassa (strain ATCC 24698 / 74-OR23-1A / CBS 708.71 / DSM 1257 / FGSC 987) protein is Histone H2A.Z-specific chaperone chz-1 (chz-1).